The sequence spans 344 residues: Adenosine deaminase (344 aa).

The Zn(2+) site is built by histidine 14 and histidine 16. The substrate site is built by histidine 16, aspartate 18, and glycine 177. A Zn(2+)-binding site is contributed by histidine 204. Residue glutamate 207 is the Proton donor of the active site. Residue aspartate 284 participates in Zn(2+) binding.

Belongs to the metallo-dependent hydrolases superfamily. Adenosine and AMP deaminases family. Adenosine deaminase subfamily. The cofactor is Zn(2+).

The enzyme catalyses adenosine + H2O + H(+) = inosine + NH4(+). It carries out the reaction 2'-deoxyadenosine + H2O + H(+) = 2'-deoxyinosine + NH4(+). Catalyzes the hydrolytic deamination of adenosine and 2-deoxyadenosine. The protein is Adenosine deaminase of Haemophilus ducreyi (strain 35000HP / ATCC 700724).